Reading from the N-terminus, the 134-residue chain is Small ribosomal subunit protein uS9c (134 aa).

Belongs to the universal ribosomal protein uS9 family.

It localises to the plastid. It is found in the chloroplast. This is Small ribosomal subunit protein uS9c (rps9) from Guillardia theta (Cryptophyte).